The sequence spans 207 residues: MRLMAEGLSARRGEDLIFNDISFALAAGEALVVTGPNGAGKSTLLRVLAGLLEPEGGRVRLEDGPSGFEHPRELSHYLGHRNAMKRELTVEENLTFWQRFLGDSPGGSGIGLVEAAEAVGLADIIHLPFGYLSAGQQRRMAMAKLIVAFRPIWLLDEPTAALDLSADRLFAGLVAAHLDRGGIVVAATHQPLGFAGAKSLEMTGFVH.

Positions Leu-3–Val-206 constitute an ABC transporter domain. Gly-35–Ser-42 serves as a coordination point for ATP.

It belongs to the ABC transporter superfamily. CcmA exporter (TC 3.A.1.107) family. In terms of assembly, the complex is composed of two ATP-binding proteins (CcmA) and two transmembrane proteins (CcmB).

It is found in the cell inner membrane. It carries out the reaction heme b(in) + ATP + H2O = heme b(out) + ADP + phosphate + H(+). Functionally, part of the ABC transporter complex CcmAB involved in the biogenesis of c-type cytochromes; once thought to export heme, this seems not to be the case, but its exact role is uncertain. Responsible for energy coupling to the transport system. This chain is Cytochrome c biogenesis ATP-binding export protein CcmA, found in Rhizobium meliloti (strain 1021) (Ensifer meliloti).